Here is a 346-residue protein sequence, read N- to C-terminus: N(4)-(beta-N-acetylglucosaminyl)-L-asparaginase (346 aa).

The N-terminal stretch at 1–23 is a signal peptide; that stretch reads MERKSNLSLLLLLLVLGMPLVRG. N-linked (GlcNAc...) asparagine glycosylation is present at Asn-38. 2 disulfides stabilise this stretch: Cys-64/Cys-69 and Cys-163/Cys-179. Thr-206 serves as the catalytic Nucleophile. Residues 234–237 and 257–260 each bind substrate; these read RVGD and TGDG. A disulfide bond links Cys-286 and Cys-306. N-linked (GlcNAc...) asparagine glycosylation is present at Asn-310. Cys-317 and Cys-345 are disulfide-bonded.

It belongs to the Ntn-hydrolase family. In terms of assembly, heterotetramer of two alpha and two beta chains arranged as a dimer of alpha/beta heterodimers. Post-translationally, cleaved into an alpha and beta chain by autocatalysis; this activates the enzyme. The N-terminal residue of the beta subunit is responsible for the nucleophile hydrolase activity. N-glycosylated.

The protein localises to the lysosome. It carries out the reaction N(4)-(beta-N-acetyl-D-glucosaminyl)-L-asparagine + H2O = N-acetyl-beta-D-glucosaminylamine + L-aspartate + H(+). Functionally, cleaves the GlcNAc-Asn bond which joins oligosaccharides to the peptide of asparagine-linked glycoproteins. The sequence is that of N(4)-(beta-N-acetylglucosaminyl)-L-asparaginase (Aga) from Mus musculus (Mouse).